Here is a 150-residue protein sequence, read N- to C-terminus: Large ribosomal subunit protein bL9 (150 aa).

It belongs to the bacterial ribosomal protein bL9 family.

In terms of biological role, binds to the 23S rRNA. This Buchnera aphidicola subsp. Schizaphis graminum (strain Sg) protein is Large ribosomal subunit protein bL9.